Here is a 1331-residue protein sequence, read N- to C-terminus: ABC multidrug transporter MDR2 (1331 aa).

The segment at 1–50 is disordered; that stretch reads MVEPSEKPNTQNDDVSKQEIRNPVSSSSSTSDKEKVAKKGNSDATKSLTP. Basic and acidic residues predominate over residues 31 to 41; it reads SDKEKVAKKGN. Transmembrane regions (helical) follow at residues 93–113, 147–167, 219–239, and 242–262; these read MILLAIVSLASIAAGAALPLF, YFVYLGIAQFILLYVSTVGFI, KVGLTLTALSTFFSAFIIGYV, and WKLALICTSTIVAMVLVMGGI. The 291-residue stretch at 97–387 folds into the ABC transmembrane type-1 1 domain; the sequence is AIVSLASIAA…VAPNTQAFAS (291 aa). N-linked (GlcNAc...) asparagine glycosylation is present at N293. 2 helical membrane passes run 325–345 and 358–378; these read LGIMFGSMMAIMYSNYGLGFW and LSAIVNILLAIVIGSFSIGNV. Residues 422–667 enclose the ABC transporter 1 domain; it reads IEFRGIKHIY…KGTYLQLVEA (246 aa). 457–464 is a binding site for ATP; it reads GPSGSGKS. N529 is a glycosylation site (N-linked (GlcNAc...) asparagine). Transmembrane regions (helical) follow at residues 762-782 and 808-828; these read LCGFFFAVLSGAGQPVQSVFF and LMFLMLGLVQLITQSAQGVIF. Positions 764–1051 constitute an ABC transmembrane type-1 2 domain; the sequence is GFFFAVLSGA…VFSFSPDMGK (288 aa). N860 carries an N-linked (GlcNAc...) asparagine glycan. The next 4 helical transmembrane spans lie at 884–904, 910–930, 995–1015, and 1025–1045; these read LGTILMVSTTLIVALTVALAF, LVCISTVPVLLLCGFYRFWIL, ASQSFSFFCLALGFWYGGGLL, and FFLCISCVIFGSQSAGIVFSF. One can recognise an ABC transporter 2 domain in the interval 1086–1324; sequence IEFRDVHFRY…KGRYYELVHM (239 aa). N1108 is a glycosylation site (N-linked (GlcNAc...) asparagine). Residue 1121-1128 coordinates ATP; that stretch reads GPSGCGKS.

The protein belongs to the ABC transporter superfamily. ABCB family. Multidrug resistance exporter (TC 3.A.1.201) subfamily.

It localises to the cell membrane. The enzyme catalyses itraconazole(in) + ATP + H2O = itraconazole(out) + ADP + phosphate + H(+). In terms of biological role, ABC-type efflux transporter involved in the modulation susceptibility to itraconazole. The chain is ABC multidrug transporter MDR2 from Trichophyton rubrum (strain ATCC MYA-4607 / CBS 118892) (Athlete's foot fungus).